The primary structure comprises 380 residues: Zinc metalloproteinase-like protein nas-21 (380 aa).

The N-terminal stretch at 1–24 (MNYFITFFFMHIAVLNFYFRFSNG) is a signal peptide. A Peptidase M12A domain is found at 46-234 (QALRMDNEPR…LMINEYYQCS (189 aa)). Asn-87 carries an N-linked (GlcNAc...) asparagine glycan. Cystine bridges form between Cys-90–Cys-233 and Cys-110–Cys-130. Glu-138 is a catalytic residue. Residues Asn-253, Asn-269, Asn-283, and Asn-304 are each glycosylated (N-linked (GlcNAc...) asparagine).

The protein resides in the secreted. May lack metalloprotease activity. In Caenorhabditis elegans, this protein is Zinc metalloproteinase-like protein nas-21 (nas-21).